The following is a 209-amino-acid chain: ATP-dependent Clp protease proteolytic subunit (209 aa).

S106 functions as the Nucleophile in the catalytic mechanism. The active site involves H131.

It belongs to the peptidase S14 family. Fourteen ClpP subunits assemble into 2 heptameric rings which stack back to back to give a disk-like structure with a central cavity, resembling the structure of eukaryotic proteasomes.

The protein localises to the cytoplasm. The enzyme catalyses Hydrolysis of proteins to small peptides in the presence of ATP and magnesium. alpha-casein is the usual test substrate. In the absence of ATP, only oligopeptides shorter than five residues are hydrolyzed (such as succinyl-Leu-Tyr-|-NHMec, and Leu-Tyr-Leu-|-Tyr-Trp, in which cleavage of the -Tyr-|-Leu- and -Tyr-|-Trp bonds also occurs).. Cleaves peptides in various proteins in a process that requires ATP hydrolysis. Has a chymotrypsin-like activity. Plays a major role in the degradation of misfolded proteins. The protein is ATP-dependent Clp protease proteolytic subunit of Brucella suis biovar 1 (strain 1330).